Consider the following 485-residue polypeptide: NADH-quinone oxidoreductase subunit N (485 aa).

14 consecutive transmembrane segments (helical) span residues 8-28, 35-55, 71-91, 105-125, 127-147, 159-179, 203-223, 235-255, 271-291, 297-317, 326-346, 373-393, 408-430, and 455-475; these read LIAL…MLSI, FLNA…LWFV, GFAM…CTFA, FYLL…ANHL, SLFL…GYAF, YTIL…LVYA, LLAG…LVPF, PAPV…GVVM, VVLA…ALSQ, LLGY…IALQ, VGGY…VVSL, AAVM…LGFI, WWLV…RVAV, and IVVL…QPLI.

It belongs to the complex I subunit 2 family. In terms of assembly, NDH-1 is composed of 13 different subunits. Subunits NuoA, H, J, K, L, M, N constitute the membrane sector of the complex.

Its subcellular location is the cell inner membrane. The catalysed reaction is a quinone + NADH + 5 H(+)(in) = a quinol + NAD(+) + 4 H(+)(out). Its function is as follows. NDH-1 shuttles electrons from NADH, via FMN and iron-sulfur (Fe-S) centers, to quinones in the respiratory chain. The immediate electron acceptor for the enzyme in this species is believed to be ubiquinone. Couples the redox reaction to proton translocation (for every two electrons transferred, four hydrogen ions are translocated across the cytoplasmic membrane), and thus conserves the redox energy in a proton gradient. The polypeptide is NADH-quinone oxidoreductase subunit N (Shigella boydii serotype 18 (strain CDC 3083-94 / BS512)).